A 372-amino-acid polypeptide reads, in one-letter code: Sesquiterpene synthase Agr9 (372 aa).

Mg(2+) contacts are provided by aspartate 87, asparagine 225, serine 229, and glutamate 233. Residues aspartate 87–aspartate 91 carry the DDXXD motif motif. The (2E,6E)-farnesyl diphosphate site is built by arginine 314 and tyrosine 315.

It belongs to the terpene synthase family. Mg(2+) serves as cofactor.

It catalyses the reaction (2E,6E)-farnesyl diphosphate = gamma-muurolene + diphosphate. The catalysed reaction is (2E,6E)-farnesyl diphosphate = delta-cadinene + diphosphate. Terpene cyclase that catalyzes the cyclization of farnesyl diphosphate (FPP) to various sesquiterpenes, including gamma-muurolene, beta-cadinene and delta-cadinene. This Cyclocybe aegerita (Black poplar mushroom) protein is Sesquiterpene synthase Agr9.